The sequence spans 138 residues: ATP synthase epsilon chain, chloroplastic (138 aa).

It belongs to the ATPase epsilon chain family. As to quaternary structure, F-type ATPases have 2 components, CF(1) - the catalytic core - and CF(0) - the membrane proton channel. CF(1) has five subunits: alpha(3), beta(3), gamma(1), delta(1), epsilon(1). CF(0) has three main subunits: a, b and c.

The protein localises to the plastid. It is found in the chloroplast thylakoid membrane. Functionally, produces ATP from ADP in the presence of a proton gradient across the membrane. The protein is ATP synthase epsilon chain, chloroplastic of Galdieria sulphuraria (Red alga).